The primary structure comprises 734 residues: Phosphoribosylformylglycinamidine synthase subunit PurL (734 aa).

Histidine 46 is an active-site residue. The ATP site is built by tyrosine 49 and lysine 88. Mg(2+) is bound at residue glutamate 90. Substrate-binding positions include 91 to 94 (SHNH) and arginine 113. The Proton acceptor role is filled by histidine 92. Residue aspartate 114 coordinates Mg(2+). Glutamine 237 serves as a coordination point for substrate. Aspartate 265 is a Mg(2+) binding site. A substrate-binding site is contributed by 309–311 (ESQ). ATP-binding residues include aspartate 489 and glycine 526. Position 527 (asparagine 527) interacts with Mg(2+). Substrate is bound at residue serine 529.

This sequence belongs to the FGAMS family. As to quaternary structure, monomer. Part of the FGAM synthase complex composed of 1 PurL, 1 PurQ and 2 PurS subunits.

The protein resides in the cytoplasm. It catalyses the reaction N(2)-formyl-N(1)-(5-phospho-beta-D-ribosyl)glycinamide + L-glutamine + ATP + H2O = 2-formamido-N(1)-(5-O-phospho-beta-D-ribosyl)acetamidine + L-glutamate + ADP + phosphate + H(+). Its pathway is purine metabolism; IMP biosynthesis via de novo pathway; 5-amino-1-(5-phospho-D-ribosyl)imidazole from N(2)-formyl-N(1)-(5-phospho-D-ribosyl)glycinamide: step 1/2. Part of the phosphoribosylformylglycinamidine synthase complex involved in the purines biosynthetic pathway. Catalyzes the ATP-dependent conversion of formylglycinamide ribonucleotide (FGAR) and glutamine to yield formylglycinamidine ribonucleotide (FGAM) and glutamate. The FGAM synthase complex is composed of three subunits. PurQ produces an ammonia molecule by converting glutamine to glutamate. PurL transfers the ammonia molecule to FGAR to form FGAM in an ATP-dependent manner. PurS interacts with PurQ and PurL and is thought to assist in the transfer of the ammonia molecule from PurQ to PurL. The polypeptide is Phosphoribosylformylglycinamidine synthase subunit PurL (Gluconobacter oxydans (strain 621H) (Gluconobacter suboxydans)).